Here is a 283-residue protein sequence, read N- to C-terminus: Large ribosomal subunit protein uL2 (283 aa).

A disordered region spans residues 215 to 283; sequence RHKGIRPTVR…IRGRKKRINN (69 aa). Residues 274–283 show a composition bias toward basic residues; the sequence is IRGRKKRINN.

The protein belongs to the universal ribosomal protein uL2 family. In terms of assembly, part of the 50S ribosomal subunit. Forms a bridge to the 30S subunit in the 70S ribosome.

In terms of biological role, one of the primary rRNA binding proteins. Required for association of the 30S and 50S subunits to form the 70S ribosome, for tRNA binding and peptide bond formation. It has been suggested to have peptidyltransferase activity; this is somewhat controversial. Makes several contacts with the 16S rRNA in the 70S ribosome. In Mycoplasma mobile (strain ATCC 43663 / 163K / NCTC 11711) (Mesomycoplasma mobile), this protein is Large ribosomal subunit protein uL2.